The sequence spans 459 residues: LETM1 domain-containing protein LETM2, mitochondrial (459 aa).

The N-terminal 25 residues, 1 to 25 (MAFYSYNSFLAIFWTRLPGHSVHPP), are a transit peptide targeting the mitochondrion. Over 26–176 (CSHFPPLAFF…LLRTCADVFR (151 aa)) the chain is Mitochondrial intermembrane. Residues 88 to 114 (GKPQPEQIPEEPKATDPQPTKDDQTEV) form a disordered region. The span at 97–111 (EEPKATDPQPTKDDQ) shows a compositional bias: basic and acidic residues. Residues 177–197 (LVPFVVFIIVPFMEFLIPVFL) traverse the membrane as a helical segment. Residues 198–459 (KLFPDMLPST…QNSKANSKGA (262 aa)) lie on the Mitochondrial matrix side of the membrane. Positions 220-440 (KMMGAKLEIA…PAPQLNGTKI (221 aa)) constitute a Letm1 RBD domain. Positions 403 to 459 (LPPSIETPKTNLGIPSSPPPESKEDITDPAPQLNGTKILQAKSQETSQNSKANSKGA) are disordered. Over residues 435-459 (LNGTKILQAKSQETSQNSKANSKGA) the composition is skewed to polar residues.

As to expression, testis and sperm.

The protein resides in the mitochondrion inner membrane. The sequence is that of LETM1 domain-containing protein LETM2, mitochondrial (Letm2) from Rattus norvegicus (Rat).